A 373-amino-acid polypeptide reads, in one-letter code: Type 2 DNA topoisomerase 6 subunit A (373 aa).

Residues 15–153 (QGDTLAKERL…FHMRPEEDGA (139 aa)) form the Topo IIA-type catalytic domain. The active-site O-(5'-phospho-DNA)-tyrosine intermediate is Tyr-110. Mg(2+)-binding residues include Glu-206 and Asp-258.

The protein belongs to the TOP6A family. Homodimer. Heterotetramer of two Top6A and two Top6B chains. Requires Mg(2+) as cofactor.

The enzyme catalyses ATP-dependent breakage, passage and rejoining of double-stranded DNA.. Relaxes both positive and negative superturns and exhibits a strong decatenase activity. The polypeptide is Type 2 DNA topoisomerase 6 subunit A (Methanosarcina acetivorans (strain ATCC 35395 / DSM 2834 / JCM 12185 / C2A)).